The primary structure comprises 246 residues: Probable transcriptional regulatory protein CTC_02215 (246 aa).

It belongs to the TACO1 family.

It is found in the cytoplasm. This Clostridium tetani (strain Massachusetts / E88) protein is Probable transcriptional regulatory protein CTC_02215.